The following is a 403-amino-acid chain: Ribosomal RNA large subunit methyltransferase I (403 aa).

A PUA domain is found at 9–88 (YPRLVLSKGR…ESIDIAFFTR (80 aa)).

It belongs to the methyltransferase superfamily. RlmI family.

It localises to the cytoplasm. The catalysed reaction is cytidine(1962) in 23S rRNA + S-adenosyl-L-methionine = 5-methylcytidine(1962) in 23S rRNA + S-adenosyl-L-homocysteine + H(+). Specifically methylates the cytosine at position 1962 (m5C1962) of 23S rRNA. The polypeptide is Ribosomal RNA large subunit methyltransferase I (Salmonella paratyphi A (strain ATCC 9150 / SARB42)).